Reading from the N-terminus, the 437-residue chain is Amino-acid acetyltransferase (437 aa).

The region spanning 289–429 (ENIRLATSFD…EHYNYQRMSK (141 aa)) is the N-acetyltransferase domain.

It belongs to the acetyltransferase family. ArgA subfamily.

It is found in the cytoplasm. The catalysed reaction is L-glutamate + acetyl-CoA = N-acetyl-L-glutamate + CoA + H(+). Its pathway is amino-acid biosynthesis; L-arginine biosynthesis; N(2)-acetyl-L-ornithine from L-glutamate: step 1/4. The protein is Amino-acid acetyltransferase of Actinobacillus pleuropneumoniae serotype 3 (strain JL03).